A 245-amino-acid polypeptide reads, in one-letter code: Collagen triple helix repeat-containing protein 1 (245 aa).

The signal sequence occupies residues 1 to 32; that stretch reads MHPQGRAASPQLLLGLFLVLLLLLQLSAPSSA. The 34-residue stretch at 59–92 folds into the Collagen-like domain; it reads QGPAGVPGRDGSPGANGIPGTPGIPGRDGFKGEK. The disordered stretch occupies residues 64–87; sequence VPGRDGSPGANGIPGTPGIPGRDG. Asn188 carries an N-linked (GlcNAc...) asparagine glycan.

In terms of processing, N-glycosylated. As to expression, expressed after injury in the carotid arteries (at protein level). Expressed in brain, lung, and after injury in fibroblasts of the adventitia and the neointima of the arteries.

The protein localises to the secreted. The protein resides in the extracellular space. Its subcellular location is the extracellular matrix. Its overexpression in smooth muscle cell lines increases their migratory ability and inhibits collagen type I expression. May act as a negative regulator of collagen matrix deposition. The chain is Collagen triple helix repeat-containing protein 1 (Cthrc1) from Rattus norvegicus (Rat).